Consider the following 226-residue polypeptide: Transcriptional activator plp-1 (226 aa).

The protein belongs to the PUR DNA-binding protein family.

The protein resides in the nucleus. The protein localises to the chromosome. Its function is as follows. Probable transcription activator. Binds telomeric DNA containing repeats of the sequence, 5'-TTAGGC-3'. Binds to end-1 promoter, activating end-1 expression, which is required for endoderm specification during embryonic development. The chain is Transcriptional activator plp-1 from Caenorhabditis elegans.